The primary structure comprises 1090 residues: Solute carrier family 38 member 10 (1090 aa).

The next 10 helical transmembrane spans lie at 9–31 (WGLI…PFCF), 36–58 (IVLG…MFLV), 84–104 (LVET…YVVI), 123–143 (TVRV…LSLQ), 153–173 (FSAM…LSSL), 229–249 (IFAS…FFGY), 272–292 (MIRV…ILPC), 323–343 (VLTL…PNVE), 345–365 (ILGF…PALI), and 378–398 (VVLW…LSVT). S441 is modified (phosphoserine). Basic and acidic residues-rich tracts occupy residues 441–454 (SQEK…KEVL), 493–508 (EAHR…KVVV), 517–528 (PEEKKPPPRLPD), 544–560 (ESEK…EGKR), 587–596 (PRKEDSRPGN), and 607–623 (DSVE…REPA). Disordered stretches follow at residues 441–675 (SQEK…AGSK), 729–831 (EIRQ…IDLR), and 857–1037 (KAAP…ELAP). Phosphoserine occurs at positions 608 and 636. Composition is skewed to basic and acidic residues over residues 654–665 (EAAEQREKKEAE), 729–744 (EIRQ…KPKP), and 758–767 (GQEEEAEHAG). At T769 the chain carries Phosphothreonine. S887 is subject to Phosphoserine. Over residues 923–936 (RQSGPTKAPVQTQA) the composition is skewed to polar residues. Composition is skewed to basic and acidic residues over residues 954–973 (PEVR…EQHK), 1004–1013 (ENAKPNRDLK), and 1026–1037 (DLASHPEQELAP).

The protein belongs to the amino acid/polyamine transporter 2 family. As to expression, expressed in neurons, astrocytes and epithelial cells scattered throughout the central nervous system structures including striatum, ependyma, cerebral cortex, hippocampus, hypothalamus, thalamus, pons, and cerebellum (at protein level). Highly expressed in paraventricular hypothalamic nucleus, suprachiasmatic nucleus, anterior hypothalamic area central part, in lateral ventricule and in dorsal 3rd ventricule (at protein level). Expressed in choroid plexus epithelial cells (at protein level).

It is found in the membrane. The enzyme catalyses L-glutamate(out) = L-glutamate(in). It carries out the reaction L-glutamine(out) = L-glutamine(in). The catalysed reaction is L-alanine(in) = L-alanine(out). It catalyses the reaction L-serine(in) = L-serine(out). The enzyme catalyses L-leucine(in) = L-leucine(out). In terms of biological role, facilitates bidirectional transport of amino acids. May act as a glutamate sensor that regulates glutamate-glutamine cycle and mTOR signaling in the brain. The transport mechanism remains to be elucidated. The polypeptide is Solute carrier family 38 member 10 (Mus musculus (Mouse)).